Consider the following 526-residue polypeptide: CTP synthase (526 aa).

An amidoligase domain region spans residues 1 to 264 (MPQRFIVVTG…HKLIAKELDI (264 aa)). A CTP-binding site is contributed by S14. S14 contacts UTP. Residues 15–20 (GIGKGI) and D72 contribute to the ATP site. D72 and E138 together coordinate Mg(2+). Residues 145 to 147 (DIE), 185 to 190 (KTKPTQ), and K221 contribute to the CTP site. UTP-binding positions include 185 to 190 (KTKPTQ) and K221. Residues 282–526 (KIGIVGKYLG…VKAAGGKIND (245 aa)) enclose the Glutamine amidotransferase type-1 domain. Position 342 (G342) interacts with L-glutamine. The active-site Nucleophile; for glutamine hydrolysis is C369. Residues 370–373 (LGMQ), E393, and R451 contribute to the L-glutamine site. Residues H499 and E501 contribute to the active site.

The protein belongs to the CTP synthase family. Homotetramer.

The catalysed reaction is UTP + L-glutamine + ATP + H2O = CTP + L-glutamate + ADP + phosphate + 2 H(+). It carries out the reaction L-glutamine + H2O = L-glutamate + NH4(+). The enzyme catalyses UTP + NH4(+) + ATP = CTP + ADP + phosphate + 2 H(+). It functions in the pathway pyrimidine metabolism; CTP biosynthesis via de novo pathway; CTP from UDP: step 2/2. Its activity is regulated as follows. Allosterically activated by GTP, when glutamine is the substrate; GTP has no effect on the reaction when ammonia is the substrate. The allosteric effector GTP functions by stabilizing the protein conformation that binds the tetrahedral intermediate(s) formed during glutamine hydrolysis. Inhibited by the product CTP, via allosteric rather than competitive inhibition. Its function is as follows. Catalyzes the ATP-dependent amination of UTP to CTP with either L-glutamine or ammonia as the source of nitrogen. Regulates intracellular CTP levels through interactions with the four ribonucleotide triphosphates. In Thermosipho africanus (strain TCF52B), this protein is CTP synthase.